The chain runs to 211 residues: Vascular-related unknown protein 1 (211 aa).

The span at 1-12 (MMDTFSCNSYEQ) shows a compositional bias: polar residues. The segment at 1–40 (MMDTFSCNSYEQNHPHDDDIDIDAHDHDSHGGDHQEESGW) is disordered. The span at 13-37 (NHPHDDDIDIDAHDHDSHGGDHQEE) shows a compositional bias: basic and acidic residues.

As to expression, expressed in vascular tissues of cotyledons, rosette leaves, sepals, petals, anther filaments. Expressed in roots, inflorescence stems and developing seeds.

The protein localises to the cytoplasm. Its subcellular location is the nucleus. Its function is as follows. Involved in the regulation of xylem development and growth. May regulate secondary wall formation during vascular development by modulation of brassinosteroid, gibberellin and auxin hormone signaling pathways. This Arabidopsis thaliana (Mouse-ear cress) protein is Vascular-related unknown protein 1.